The chain runs to 570 residues: Protein mom-5 (570 aa).

The first 16 residues, 1–16 (MHRHILILFLFGCLSA), serve as a signal peptide directing secretion. At 17–230 (DQRLSSTSIS…FDGRVRRILR (214 aa)) the chain is on the extracellular side. Positions 32-148 (STTRKCEHIT…FPVTDLCVGK (117 aa)) constitute an FZ domain. Disulfide bonds link C37-C98, C45-C91, C82-C119, C108-C145, and C112-C136. N51 carries an N-linked (GlcNAc...) asparagine glycan. N149 is a glycosylation site (N-linked (GlcNAc...) asparagine). Residues 231 to 251 (IWTAAWSVACFVCSLFTLVTF) form a helical membrane-spanning segment. At 252 to 264 (LVDLSRFAYPVRP) the chain is on the cytoplasmic side. A helical membrane pass occupies residues 265 to 285 (ILYLAFCYLAISTVYMIGVVG). The Extracellular portion of the chain corresponds to 286 to 319 (EDGFACGTYGSTPTTLVTQGGENVGCSALAVVHY). The chain crosses the membrane as a helical span at residues 320-340 (FFFMSSCAWWLVLCLAWFLAA). Residues 341–348 (NLKWGAES) are Cytoplasmic-facing. A helical membrane pass occupies residues 349-369 (IAALSPYFHAMCWGVPAVLSV). Over 370 to 395 (TVLVTNSVDGDVFTGICSVGNLNPSA) the chain is Extracellular. A helical transmembrane segment spans residues 396-416 (LVYFFFTPIVVSLALGAVLLV). Residues 417–449 (CGIWSMIRIRSYIKLQHADVERNISKLEKLMLR) lie on the Cytoplasmic side of the membrane. A helical transmembrane segment spans residues 450 to 470 (IGAFAIMYSLPTAMNAAIMWY). Over 471–515 (QAVNMPAWLEGWLHHRCVRLQDRELFGFTYPVDDCPMDPKVAAPE) the chain is Extracellular. A helical transmembrane segment spans residues 516–536 (IIVFLLKYVSQLVVGITCAIW). Residues 537–570 (VVSSKTLSSYHKAYLALSSRSPTVPAHVDQVNMR) are Cytoplasmic-facing.

The protein belongs to the G-protein coupled receptor Fz/Smo family.

It is found in the cell membrane. Its subcellular location is the early endosome. Its function is as follows. Receptor for Wnt proteins. Most frizzled receptors are coupled to the beta-catenin canonical signaling pathway, which leads to the activation of disheveled proteins, inhibition of gsk-3 kinase, nuclear accumulation of beta-catenin and activation of Wnt target genes. A second signaling pathway involving PKC and calcium fluxes has been seen for some family members, but it is not yet clear if it represents a distinct pathway or if it can be integrated in the canonical pathway, as pkc seems to be required for Wnt-mediated inactivation of gsk-3 kinase. Both pathways seem to involve interactions with G-proteins. Required in embryonic development for the correct positioning and orientation of the mitotic spindles and division planes in blastomere cells. During early embryonic cell divisions, directs the asymmetric positioning of transcription factors such as pop-1 and dsh-2 in daughter cells in order to determine cell fate specification. Acts redundantly with other Wnt receptors such as lin-17 to control vulval precursor cell specification and also the polarity of different cell types including distal tip cells, seam cells, AVG interneurons and P-cells and their descendants. Plays a role in the migration of cell types including distal tip cells and the QR neuroblast descendants, QR.p and QR.pa during larval development. Negatively regulates the unc-6/Netrin receptors unc-5 and unc-40 to control distal tip cell polarity and migration. Acts through ced-5/DOCK180 and ced-10/Rac to control both distal tip cell migration and the phagocytic clearance of apoptotic cell corpses. Furthermore, it is also required for the migration and axon guidance of the different neuronal cell types including CAN, ALM, HSN and the two mechanosensory neurons AVM and PVM. Mediates Wnt receptor cfz-2 in directing ALM migration, but may also act redundantly with the Wnt receptors cfz-2 and mig-1 to direct the migration of other neuronal cell types including CAN and HSN. Mediates Wnt ligand egl-20 in the control of the anterior-posterior axon guidance of AVM and PVM neurons. The protein is Protein mom-5 of Caenorhabditis elegans.